Consider the following 318-residue polypeptide: uncharacterized protein (318 aa).

The disordered stretch occupies residues 19 to 63 (VPPDARHHEPRPGMTDHPDTGNGIGLTGRPPRAIPDPAPRSSHGP). A compositionally biased stretch (basic and acidic residues) spans 21 to 37 (PDARHHEPRPGMTDHPD). 72-79 (QKGGVGKT) is an ATP binding site.

This sequence belongs to the ParA family.

May play a role in septum formation. This is an uncharacterized protein from Mycobacterium tuberculosis (strain CDC 1551 / Oshkosh).